The primary structure comprises 177 residues: Peptide methionine sulfoxide reductase MsrA (177 aa).

Cys-15 is an active-site residue.

It belongs to the MsrA Met sulfoxide reductase family.

It catalyses the reaction L-methionyl-[protein] + [thioredoxin]-disulfide + H2O = L-methionyl-(S)-S-oxide-[protein] + [thioredoxin]-dithiol. The enzyme catalyses [thioredoxin]-disulfide + L-methionine + H2O = L-methionine (S)-S-oxide + [thioredoxin]-dithiol. In terms of biological role, has an important function as a repair enzyme for proteins that have been inactivated by oxidation. Catalyzes the reversible oxidation-reduction of methionine sulfoxide in proteins to methionine. The polypeptide is Peptide methionine sulfoxide reductase MsrA (Listeria monocytogenes serotype 4a (strain HCC23)).